A 248-amino-acid polypeptide reads, in one-letter code: Ubiquinone/menaquinone biosynthesis C-methyltransferase UbiE (248 aa).

S-adenosyl-L-methionine-binding residues include serine 68 and aspartate 92.

Belongs to the class I-like SAM-binding methyltransferase superfamily. MenG/UbiE family.

It carries out the reaction a 2-demethylmenaquinol + S-adenosyl-L-methionine = a menaquinol + S-adenosyl-L-homocysteine + H(+). The catalysed reaction is a 2-methoxy-6-(all-trans-polyprenyl)benzene-1,4-diol + S-adenosyl-L-methionine = a 5-methoxy-2-methyl-3-(all-trans-polyprenyl)benzene-1,4-diol + S-adenosyl-L-homocysteine + H(+). It participates in quinol/quinone metabolism; menaquinone biosynthesis; menaquinol from 1,4-dihydroxy-2-naphthoate: step 2/2. It functions in the pathway cofactor biosynthesis; ubiquinone biosynthesis. In terms of biological role, methyltransferase required for the conversion of demethylmenaquinol (DMKH2) to menaquinol (MKH2) and the conversion of 2-polyprenyl-6-methoxy-1,4-benzoquinol (DDMQH2) to 2-polyprenyl-3-methyl-6-methoxy-1,4-benzoquinol (DMQH2). The chain is Ubiquinone/menaquinone biosynthesis C-methyltransferase UbiE from Rickettsia bellii (strain RML369-C).